The primary structure comprises 426 residues: Glutamyl-tRNA reductase (426 aa).

Substrate contacts are provided by residues 52–55 (TCNR), S110, 115–117 (EYE), and Q121. The active-site Nucleophile is C53. 190–195 (GAGEMG) is an NADP(+) binding site.

This sequence belongs to the glutamyl-tRNA reductase family. As to quaternary structure, homodimer.

It catalyses the reaction (S)-4-amino-5-oxopentanoate + tRNA(Glu) + NADP(+) = L-glutamyl-tRNA(Glu) + NADPH + H(+). The protein operates within porphyrin-containing compound metabolism; protoporphyrin-IX biosynthesis; 5-aminolevulinate from L-glutamyl-tRNA(Glu): step 1/2. Its function is as follows. Catalyzes the NADPH-dependent reduction of glutamyl-tRNA(Glu) to glutamate 1-semialdehyde (GSA). The polypeptide is Glutamyl-tRNA reductase (Saccharolobus islandicus (strain Y.N.15.51 / Yellowstone #2) (Sulfolobus islandicus)).